Here is a 92-residue protein sequence, read N- to C-terminus: MIQRDIEYSGQYSKDVKLAQKRHKDMNKLKYLMTLLINNTLPLPAVYKDHPLQGSWKGYRDAHVEPDWILIYKLTDKLLRFERTGTHAALFG.

The active-site Proton donor is histidine 87.

Belongs to the RelE toxin family. YafQ subfamily. In terms of assembly, monomer in the absence of antitoxin. Forms a heterotetramer with antitoxin DinJ, with 2 YafQ-DinJ dimers associated via the N-terminus of the DinJ antitoxins (YafQ-(DinJ)2-YafQ). In this complex the toxin activity is inhibited. Binds the 70S ribosome via the 50S ribosomal subunit.

Its function is as follows. Toxic component of a type II toxin-antitoxin (TA) system. A sequence-specific mRNA endoribonuclease that inhibits translation elongation and induces bacterial stasis. Cleavage occurs between the second and third residue of the Lys codon followed by a G or A (5'AAA(G/A)3'), is reading-frame dependent and occurs within the 5' end of most mRNAs. Ribosome-binding confers the sequence specificity and reading frame-dependence. When overexpressed in liquid media YafQ partially inhibits protein synthesis, with a reduction in growth rate and colony growth rate. This effect is counteracted by coexpression with cognate antitoxin DinJ. YafQ and DinJ together bind their own promoter, and repress its expression. Cell death governed by the MazE-MazF and DinJ-YafQ TA systems seems to play a role in biofilm formation. This chain is mRNA interferase toxin YafQ (yafQ), found in Escherichia coli (strain K12).